Reading from the N-terminus, the 371-residue chain is Mannonate dehydratase (371 aa).

Belongs to the mannonate dehydratase family. The cofactor is Fe(2+). It depends on Mn(2+) as a cofactor.

It carries out the reaction D-mannonate = 2-dehydro-3-deoxy-D-gluconate + H2O. The protein operates within carbohydrate metabolism; pentose and glucuronate interconversion. Its function is as follows. Catalyzes the dehydration of D-mannonate. In Geobacillus thermodenitrificans (strain NG80-2), this protein is Mannonate dehydratase.